Consider the following 239-residue polypeptide: Fatty acid metabolism regulator protein (239 aa).

An HTH gntR-type domain is found at 6–74; that stretch reads QSPAGFAEEY…HGKPTKVNNF (69 aa). The H-T-H motif DNA-binding region spans 34-53; it reads ERELSELIGVTRTTLREVLQ.

As to quaternary structure, homodimer.

It localises to the cytoplasm. Its function is as follows. Multifunctional regulator of fatty acid metabolism. The sequence is that of Fatty acid metabolism regulator protein from Klebsiella pneumoniae subsp. pneumoniae (strain ATCC 700721 / MGH 78578).